A 68-amino-acid polypeptide reads, in one-letter code: KCNQ1 downstream neighbor protein (68 aa).

Positions 28–68 (GVASGCSPSKASQEARGKEKCPTLNGQPQWSALFTLPPQRE) are disordered.

Shows reduced expression in Wilms' tumor samples.

In Homo sapiens (Human), this protein is KCNQ1 downstream neighbor protein (KCNQ1DN).